The sequence spans 89 residues: Bombyxin A-2 (89 aa).

A signal peptide spans 1–19 (MKILLAIALMLSTVMWVST). Glutamine 20 is modified (pyrrolidone carboxylic acid). 3 disulfides stabilise this stretch: cysteine 29/cysteine 76, cysteine 41/cysteine 89, and cysteine 75/cysteine 80. A propeptide spans 50–68 (SDAQFASYGSAWLMPYSAG) (c peptide like).

This sequence belongs to the insulin family. In terms of assembly, heterodimer of a B chain and an A chain linked by two disulfide bonds.

The protein localises to the secreted. Brain peptide responsible for activation of prothoracic glands to produce ecdysone in insects. This Bombyx mori (Silk moth) protein is Bombyxin A-2 (BBXA2).